A 142-amino-acid polypeptide reads, in one-letter code: ATP synthase epsilon chain (142 aa).

The protein belongs to the ATPase epsilon chain family. F-type ATPases have 2 components, CF(1) - the catalytic core - and CF(0) - the membrane proton channel. CF(1) has five subunits: alpha(3), beta(3), gamma(1), delta(1), epsilon(1). CF(0) has three main subunits: a, b and c.

It is found in the cell inner membrane. In terms of biological role, produces ATP from ADP in the presence of a proton gradient across the membrane. The sequence is that of ATP synthase epsilon chain from Haemophilus influenzae (strain 86-028NP).